Here is a 224-residue protein sequence, read N- to C-terminus: Proteasome subunit beta (224 aa).

Positions Met-1–Gly-6 are cleaved as a propeptide — removed in mature form; by autocatalysis. Catalysis depends on Thr-7, which acts as the Nucleophile.

Belongs to the peptidase T1B family. In terms of assembly, the 20S proteasome core is composed of 14 alpha and 14 beta subunits that assemble into four stacked heptameric rings, resulting in a barrel-shaped structure. The two inner rings, each composed of seven catalytic beta subunits, are sandwiched by two outer rings, each composed of seven alpha subunits. The catalytic chamber with the active sites is on the inside of the barrel. Has a gated structure, the ends of the cylinder being occluded by the N-termini of the alpha-subunits. Is capped at one or both ends by the proteasome regulatory ATPase, PAN.

It localises to the cytoplasm. The enzyme catalyses Cleavage of peptide bonds with very broad specificity.. With respect to regulation, the formation of the proteasomal ATPase PAN-20S proteasome complex, via the docking of the C-termini of PAN into the intersubunit pockets in the alpha-rings, triggers opening of the gate for substrate entry. Interconversion between the open-gate and close-gate conformations leads to a dynamic regulation of the 20S proteasome proteolysis activity. Functionally, component of the proteasome core, a large protease complex with broad specificity involved in protein degradation. The polypeptide is Proteasome subunit beta (Methanocaldococcus fervens (strain DSM 4213 / JCM 15782 / AG86) (Methanococcus fervens)).